The chain runs to 184 residues: Pupal cuticle protein (184 aa).

The first 15 residues, 1 to 15 (MYLLVNFIVALAVLQ), serve as a signal peptide directing secretion. The region spanning 42-103 (DGKYRYAYET…PVGAHIPQVP (62 aa)) is the Chitin-binding type R&amp;R domain. Residues 147–160 (DHTIPQSRPSTTPK) show a composition bias toward polar residues. The interval 147–184 (DHTIPQSRPSTTPKTIYLTHPPTTTSRPLRQRRALPTH) is disordered. Over residues 175-184 (LRQRRALPTH) the composition is skewed to basic residues.

In terms of biological role, component of the cuticle of the pupa of fruit fly. The sequence is that of Pupal cuticle protein (Pcp) from Drosophila melanogaster (Fruit fly).